The following is a 665-amino-acid chain: non-specific serine/threonine protein kinase (665 aa).

The Protein kinase domain occupies 145–597; the sequence is FDVHCRIGSG…AEEALKHPFF (453 aa). ATP contacts are provided by residues 151–159 and lysine 181; that span reads IGSGTFSTV. Catalysis depends on aspartate 268, which acts as the Proton acceptor.

This sequence belongs to the protein kinase superfamily. Ser/Thr protein kinase family. As to quaternary structure, interacts with chif (via N-terminus).

The catalysed reaction is L-seryl-[protein] + ATP = O-phospho-L-seryl-[protein] + ADP + H(+). It catalyses the reaction L-threonyl-[protein] + ATP = O-phospho-L-threonyl-[protein] + ADP + H(+). Its function is as follows. Probable serine/threonine protein kinase that forms a complex with the N-terminal peptide of the chiffon protein and may be involved in regulating meiotic processes in the male testis. The chain is non-specific serine/threonine protein kinase from Drosophila melanogaster (Fruit fly).